Here is a 281-residue protein sequence, read N- to C-terminus: MKQFSAKYALILLATAGQALAASTQGISEDLYNRLVEMATISQAAYADLCNIPSTIIKGEKIYNAQTDINGWILRDDTSKEIITVFRGTGSDTNLQLDTNYTLTPFDTLPQCNDCEVHGGYYIGWISVQDQVESLVKQQASQYPDYALTVTGHSLGASMAALTAAQLSATYDNVRLYTFGEPRSGNQAFASYMNDAFQVSSPETTQYFRVTHSNDGIPNLPPAEQGYAHGGVEYWSVDPYSAQNTFVCTGDEVQCCEAQGGQGVNDAHTTYFGMTSGACTW.

The N-terminal stretch at 1-21 is a signal peptide; sequence MKQFSAKYALILLATAGQALA. 3 disulfide bridges follow: Cys50–Cys279, Cys112–Cys115, and Cys248–Cys255. Asp98 is a substrate binding site. A glycan (N-linked (GlcNAc...) asparagine) is linked at Asn100. Tyr101 contacts substrate. Ser154 functions as the Nucleophile in the catalytic mechanism. Residue Asp215 is the Charge relay system of the active site. His268 serves as a coordination point for substrate. His268 functions as the Charge relay system in the catalytic mechanism.

It belongs to the AB hydrolase superfamily. FaeA family.

Its subcellular location is the secreted. It catalyses the reaction feruloyl-polysaccharide + H2O = ferulate + polysaccharide.. Involved in degradation of plant cell walls. Hydrolyzes the feruloyl-arabinose ester bond in arabinoxylans, and the feruloyl-galactose ester bond in pectin. This is Probable feruloyl esterase A (faeA) from Aspergillus niger (strain ATCC MYA-4892 / CBS 513.88 / FGSC A1513).